Here is a 491-residue protein sequence, read N- to C-terminus: G2/mitotic-specific cyclin-2 (491 aa).

At serine 2 the chain carries N-acetylserine. Disordered stretches follow at residues 59–107 (EGSR…DPSS) and 164–184 (HPAR…SGKK). The span at 67–77 (TRESVSRSTAA) shows a compositional bias: polar residues.

The protein belongs to the cyclin family. Cyclin AB subfamily. As to quaternary structure, interacts with NAP1.

Its function is as follows. Essential for the control of the cell cycle at the G2/M (mitosis) transition. Interacts with the CDC2 protein kinase to form MPF. G2/M cyclins accumulate steadily during G2 and are abruptly destroyed at mitosis. This Saccharomyces cerevisiae (strain ATCC 204508 / S288c) (Baker's yeast) protein is G2/mitotic-specific cyclin-2 (CLB2).